Consider the following 353-residue polypeptide: Photosystem II D2 protein (353 aa).

Position 2 is an N-acetylthreonine (Thr-2). The residue at position 2 (Thr-2) is a Phosphothreonine. Residues 41–61 (CAYFALGGWFTGTTFVTSWYT) traverse the membrane as a helical segment. His-118 is a binding site for chlorophyll a. The chain crosses the membrane as a helical span at residues 125–141 (GFMLRQFELARSVQLRP). Pheophytin a contacts are provided by Gln-130 and Asn-143. The helical transmembrane segment at 153–166 (VFVSVFLIYPLGQS) threads the bilayer. His-198 is a binding site for chlorophyll a. The chain crosses the membrane as a helical span at residues 208-228 (AALLCAIHGATVENTLFEDGD). Positions 215 and 262 each coordinate a plastoquinone. His-215 lines the Fe cation pocket. His-269 contributes to the Fe cation binding site. The chain crosses the membrane as a helical span at residues 279 to 295 (GLWMSALGVVGLALNLR).

Belongs to the reaction center PufL/M/PsbA/D family. PSII is composed of 1 copy each of membrane proteins PsbA, PsbB, PsbC, PsbD, PsbE, PsbF, PsbH, PsbI, PsbJ, PsbK, PsbL, PsbM, PsbT, PsbX, PsbY, PsbZ, Psb30/Ycf12, at least 3 peripheral proteins of the oxygen-evolving complex and a large number of cofactors. It forms dimeric complexes. It depends on The D1/D2 heterodimer binds P680, chlorophylls that are the primary electron donor of PSII, and subsequent electron acceptors. It shares a non-heme iron and each subunit binds pheophytin, quinone, additional chlorophylls, carotenoids and lipids. There is also a Cl(-1) ion associated with D1 and D2, which is required for oxygen evolution. The PSII complex binds additional chlorophylls, carotenoids and specific lipids. as a cofactor.

It is found in the plastid. The protein resides in the chloroplast thylakoid membrane. It catalyses the reaction 2 a plastoquinone + 4 hnu + 2 H2O = 2 a plastoquinol + O2. In terms of biological role, photosystem II (PSII) is a light-driven water:plastoquinone oxidoreductase that uses light energy to abstract electrons from H(2)O, generating O(2) and a proton gradient subsequently used for ATP formation. It consists of a core antenna complex that captures photons, and an electron transfer chain that converts photonic excitation into a charge separation. The D1/D2 (PsbA/PsbD) reaction center heterodimer binds P680, the primary electron donor of PSII as well as several subsequent electron acceptors. D2 is needed for assembly of a stable PSII complex. In Aethionema grandiflorum (Persian stone-cress), this protein is Photosystem II D2 protein.